The following is a 210-amino-acid chain: Thymidylate kinase (210 aa).

Residue 10–17 (GPEGAGKS) participates in ATP binding.

The protein belongs to the thymidylate kinase family.

It carries out the reaction dTMP + ATP = dTDP + ADP. In terms of biological role, phosphorylation of dTMP to form dTDP in both de novo and salvage pathways of dTTP synthesis. In Pseudomonas fluorescens (strain Pf0-1), this protein is Thymidylate kinase.